A 262-amino-acid polypeptide reads, in one-letter code: Carbonic anhydrase 13 (262 aa).

Positions 4–261 (LSWGYREHNG…LKGRKVRASF (258 aa)) constitute an Alpha-carbonic anhydrase domain. His-65 serves as the catalytic Proton donor/acceptor. Zn(2+) is bound by residues His-95, His-97, and His-120. Residue 200-201 (TV) coordinates substrate.

It belongs to the alpha-carbonic anhydrase family. It depends on Zn(2+) as a cofactor. Expressed in thymus, small intestine, spleen, prostate, ovary, colon and testis.

The enzyme catalyses hydrogencarbonate + H(+) = CO2 + H2O. Its activity is regulated as follows. Inhibited by acetazolamide. Reversible hydration of carbon dioxide. In Homo sapiens (Human), this protein is Carbonic anhydrase 13 (CA13).